The sequence spans 441 residues: Trigger factor (441 aa).

In terms of domain architecture, PPIase FKBP-type spans 175–257; the sequence is GDFISLSLHV…VNAVIEVVAP (83 aa).

The protein belongs to the FKBP-type PPIase family. Tig subfamily.

The protein localises to the cytoplasm. It carries out the reaction [protein]-peptidylproline (omega=180) = [protein]-peptidylproline (omega=0). Involved in protein export. Acts as a chaperone by maintaining the newly synthesized protein in an open conformation. Functions as a peptidyl-prolyl cis-trans isomerase. In Chlamydia abortus (strain DSM 27085 / S26/3) (Chlamydophila abortus), this protein is Trigger factor.